The following is a 234-amino-acid chain: Large ribosomal subunit protein uL1 (234 aa).

It belongs to the universal ribosomal protein uL1 family. In terms of assembly, part of the 50S ribosomal subunit.

Functionally, binds directly to 23S rRNA. The L1 stalk is quite mobile in the ribosome, and is involved in E site tRNA release. Protein L1 is also a translational repressor protein, it controls the translation of the L11 operon by binding to its mRNA. This chain is Large ribosomal subunit protein uL1, found in Salmonella gallinarum (strain 287/91 / NCTC 13346).